We begin with the raw amino-acid sequence, 173 residues long: Fimbrial protein PrsE (173 aa).

A signal peptide spans 1–24 (MKKIRGLCLPVMLGAVLMSQHVHA).

The protein resides in the secreted. The protein localises to the fimbrium. Functionally, fimbriae (also called pili), polar filaments radiating from the surface of the bacterium to a length of 0.5-1.5 micrometers and numbering 100-300 per cell, enable bacteria to colonize the epithelium of specific host organs. The chain is Fimbrial protein PrsE (prsE) from Escherichia coli.